The primary structure comprises 281 residues: Fructose-bisphosphate aldolase class 1 (281 aa).

Lysine 191 acts as the Schiff-base intermediate with dihydroxyacetone-P in catalysis.

Belongs to the DeoC/FbaB aldolase family. As to quaternary structure, homooctamer.

It is found in the cytoplasm. Its subcellular location is the chromosome. The catalysed reaction is beta-D-fructose 1,6-bisphosphate = D-glyceraldehyde 3-phosphate + dihydroxyacetone phosphate. Activated by citrate. This Thermococcus kodakarensis (strain ATCC BAA-918 / JCM 12380 / KOD1) (Pyrococcus kodakaraensis (strain KOD1)) protein is Fructose-bisphosphate aldolase class 1 (fba).